A 310-amino-acid chain; its full sequence is UPF0761 membrane protein VFMJ11_0098 (310 aa).

6 helical membrane-spanning segments follow: residues 34–54, 97–117, 136–156, 178–198, 207–227, and 242–262; these read YMAY…LSVL, MTAV…SSID, FSLY…SLAA, LLGW…YLLV, HALI…VGFA, and ALAA…IVLI.

The protein belongs to the UPF0761 family.

It is found in the cell inner membrane. The sequence is that of UPF0761 membrane protein VFMJ11_0098 from Aliivibrio fischeri (strain MJ11) (Vibrio fischeri).